Here is a 591-residue protein sequence, read N- to C-terminus: ATPase family AAA domain-containing protein 3A (591 aa).

A disordered region spans residues 1-52 (MSWLFGIKGPKGEGTGPPLPLPPAQPGAESGGDRGAGDRPSPKDKWSNFDPT). Position 2 is an N-acetylserine (Ser2). The required for interaction with the inner surface of the mitochondrial outer membrane stretch occupies residues 2–49 (SWLFGIKGPKGEGTGPPLPLPPAQPGAESGGDRGAGDRPSPKDKWSNF). Over 2–245 (SWLFGIKGPK…FRAFVTDWDK (244 aa)) the chain is Mitochondrial intermembrane. Basic and acidic residues predominate over residues 31–47 (GGDRGAGDRPSPKDKWS). The stretch at 55–216 (ERAAKAAREL…REQIRLKAAE (162 aa)) forms a coiled coil. The helical transmembrane segment at 246-263 (VTATVAGLTLLAVGVYSA) threads the bilayer. Residues 264 to 591 (KNATSVAGRY…KPPHPSLLSC (328 aa)) lie on the Mitochondrial matrix side of the membrane. The interval 289 to 304 (RISVLEALRHPIQVSR) is S100B-binding. Position 351 to 358 (351 to 358 (GPPGTGKT)) interacts with ATP. Lys490 carries the post-translational modification N6-acetyllysine; alternate. An N6-succinyllysine; alternate modification is found at Lys490. An N6-acetyllysine mark is found at Lys494 and Lys512.

The protein belongs to the AAA ATPase family. In terms of assembly, can form homooligomers. Homodimer formation at the N-terminus may be regulated by ATP and is required for the interaction with the inner surface of the mitochondrial outer membrane and correct mitochondrial homeostasis. Interacts with components of the mitochondrial ribosome and with other proteins involved in mitochondrial RNA metabolism. May also interact with protein involved in lipid metabolism, including STARD9. May interact with FAM210A. Interacts with GADD45GIP1. Interacts with S100B in a Ca(+2)- and Zn(+2)-dependent manner; this interaction probably occurs in the cytosol prior to mitochondrial targeting. S100B could assist ATAD3A cytoplasmic processing, preventing aggregation and favoring mitochondrial localization. Interacts with HSP60/HSPD1. Interacts with CLPB. Interacts with EIF2AK3/PERK; ATAD3A and EIF2S1/eIF-2-alpha occupy a common binding site within the cytoplasmic loop of EIF2AK3/PERK, leading to prevent EIF2AK3/PERK association with its substrate EIF2S1/eIF-2-alpha.

It localises to the mitochondrion inner membrane. It is found in the mitochondrion matrix. The protein resides in the mitochondrion nucleoid. The catalysed reaction is ATP + H2O = ADP + phosphate + H(+). Functionally, essential for mitochondrial network organization, mitochondrial metabolism and cell growth at organism and cellular level. May play an important role in mitochondrial protein synthesis. May also participate in mitochondrial DNA replication. May bind to mitochondrial DNA D-loops and contribute to nucleoid stability. Required for enhanced channeling of cholesterol for hormone-dependent steroidogenesis. Involved in mitochondrial-mediated antiviral innate immunity. Required to protect mitochondria from the PERK-mediated unfolded protein response: specifically inhibits the activity of EIF2AK3/PERK at mitochondria-endoplasmic reticulum contact sites, thereby providing a safe haven for mitochondrial protein translation during endoplasmic reticulum stress. Ability to inhibit EIF2AK3/PERK is independent of its ATPase activity. Also involved in the mitochondrial DNA damage response by promoting signaling between damaged genomes and the mitochondrial membrane, leading to activation of the integrated stress response (ISR). The polypeptide is ATPase family AAA domain-containing protein 3A (Atad3a) (Rattus norvegicus (Rat)).